The chain runs to 127 residues: Glycine cleavage system H protein (127 aa).

One can recognise a Lipoyl-binding domain in the interval 22 to 104 (EVVIGITHFA…YEGAWMVKVE (83 aa)). Lysine 63 carries the post-translational modification N6-lipoyllysine.

It belongs to the GcvH family. As to quaternary structure, the glycine cleavage system is composed of four proteins: P, T, L and H. The cofactor is (R)-lipoate.

In terms of biological role, the glycine cleavage system catalyzes the degradation of glycine. The H protein shuttles the methylamine group of glycine from the P protein to the T protein. Is also involved in protein lipoylation via its role as an octanoyl/lipoyl carrier protein intermediate. This Bacillus cereus (strain ZK / E33L) protein is Glycine cleavage system H protein.